Consider the following 401-residue polypeptide: S-adenosylmethionine synthase (401 aa).

135-140 (GHGSGD) serves as a coordination point for ATP.

This sequence belongs to the AdoMet synthase 2 family. Requires Mg(2+) as cofactor.

The enzyme catalyses L-methionine + ATP + H2O = S-adenosyl-L-methionine + phosphate + diphosphate. It participates in amino-acid biosynthesis; S-adenosyl-L-methionine biosynthesis; S-adenosyl-L-methionine from L-methionine: step 1/1. In terms of biological role, catalyzes the formation of S-adenosylmethionine from methionine and ATP. This is S-adenosylmethionine synthase (mat) from Methanothermobacter thermautotrophicus (strain ATCC 29096 / DSM 1053 / JCM 10044 / NBRC 100330 / Delta H) (Methanobacterium thermoautotrophicum).